The sequence spans 107 residues: U1-lycotoxin-Ls1v (107 aa).

Residues 1–20 (MMKVLVVVALLVTLISYSSS) form the signal peptide. Positions 21–41 (EGIDDLEADELLSLTANEQTR) are excised as a propeptide. Cystine bridges form between cysteine 44–cysteine 59, cysteine 51–cysteine 68, cysteine 58–cysteine 86, and cysteine 70–cysteine 84.

This sequence belongs to the neurotoxin 19 (CSTX) family. 04 (U1-Lctx) subfamily. As to expression, expressed by the venom gland.

It is found in the secreted. The chain is U1-lycotoxin-Ls1v from Lycosa singoriensis (Wolf spider).